An 828-amino-acid chain; its full sequence is Periplasmic nitrate reductase (828 aa).

Residues 1–31 (MKLSRRSFMKANAVAAAAAAAGLSVPGVARA) constitute a signal peptide (tat-type signal). The 4Fe-4S Mo/W bis-MGD-type domain occupies 39-95 (IKWDKAPCRFCGTGCGVLVGTQQGRVVACQGDPDAPVNRGLNCIKGYFLPKIMYGKD). The [4Fe-4S] cluster site is built by Cys46, Cys49, Cys53, and Cys81. Mo-bis(molybdopterin guanine dinucleotide) is bound by residues Lys83, Gln150, Asn175, Cys179, 212-219 (WGANMAEM), 243-247 (STYQH), 262-264 (QSD), Met372, Gln376, Asn482, 508-509 (SD), Lys531, Asp558, and 718-727 (TGRVLEHWHT). Phe794 lines the substrate pocket. Asn802 and Lys819 together coordinate Mo-bis(molybdopterin guanine dinucleotide).

This sequence belongs to the prokaryotic molybdopterin-containing oxidoreductase family. NasA/NapA/NarB subfamily. As to quaternary structure, component of the periplasmic nitrate reductase NapAB complex composed of NapA and NapB. The cofactor is [4Fe-4S] cluster. Mo-bis(molybdopterin guanine dinucleotide) is required as a cofactor. In terms of processing, predicted to be exported by the Tat system. The position of the signal peptide cleavage has not been experimentally proven.

It is found in the periplasm. The enzyme catalyses 2 Fe(II)-[cytochrome] + nitrate + 2 H(+) = 2 Fe(III)-[cytochrome] + nitrite + H2O. Its function is as follows. Catalytic subunit of the periplasmic nitrate reductase complex NapAB. Receives electrons from NapB and catalyzes the reduction of nitrate to nitrite. The sequence is that of Periplasmic nitrate reductase from Escherichia coli (strain K12 / MC4100 / BW2952).